Consider the following 200-residue polypeptide: ATP-dependent Clp protease proteolytic subunit (200 aa).

Serine 105 acts as the Nucleophile in catalysis. The active site involves histidine 130.

This sequence belongs to the peptidase S14 family. Fourteen ClpP subunits assemble into 2 heptameric rings which stack back to back to give a disk-like structure with a central cavity, resembling the structure of eukaryotic proteasomes.

It is found in the cytoplasm. It carries out the reaction Hydrolysis of proteins to small peptides in the presence of ATP and magnesium. alpha-casein is the usual test substrate. In the absence of ATP, only oligopeptides shorter than five residues are hydrolyzed (such as succinyl-Leu-Tyr-|-NHMec, and Leu-Tyr-Leu-|-Tyr-Trp, in which cleavage of the -Tyr-|-Leu- and -Tyr-|-Trp bonds also occurs).. In terms of biological role, cleaves peptides in various proteins in a process that requires ATP hydrolysis. Has a chymotrypsin-like activity. Plays a major role in the degradation of misfolded proteins. This chain is ATP-dependent Clp protease proteolytic subunit, found in Hydrogenovibrio crunogenus (strain DSM 25203 / XCL-2) (Thiomicrospira crunogena).